Here is a 175-residue protein sequence, read N- to C-terminus: Urease accessory protein UreE (175 aa).

Residues 151-175 (GGAYGGSPSHAHRHSHVHSHSHETP) are disordered. Positions 160-169 (HAHRHSHVHS) are enriched in basic residues.

It belongs to the UreE family.

It is found in the cytoplasm. Its function is as follows. Involved in urease metallocenter assembly. Binds nickel. Probably functions as a nickel donor during metallocenter assembly. The sequence is that of Urease accessory protein UreE from Synechococcus sp. (strain WH7805).